We begin with the raw amino-acid sequence, 40 residues long: Fibrinolytic protease (40 aa).

A Peptidase S1 domain is found at I1–P40.

This sequence belongs to the peptidase S1 family.

It is found in the secreted. The protein resides in the extracellular space. Serine protease with fibrinolytic activity. In Euphausia superba (Antarctic krill), this protein is Fibrinolytic protease.